The sequence spans 93 residues: Small ribosomal subunit protein uS17 (93 aa).

It belongs to the universal ribosomal protein uS17 family. In terms of assembly, part of the 30S ribosomal subunit.

In terms of biological role, one of the primary rRNA binding proteins, it binds specifically to the 5'-end of 16S ribosomal RNA. The chain is Small ribosomal subunit protein uS17 from Corynebacterium kroppenstedtii (strain DSM 44385 / JCM 11950 / CIP 105744 / CCUG 35717).